Consider the following 264-residue polypeptide: Probable glycerophosphodiester phosphodiesterase 2 (264 aa).

The GP-PDE domain occupies 17-255 (RIAMAHRGFT…DRADLLRDVL (239 aa)). The active-site Proton acceptor is the histidine 22. Glutamate 50, aspartate 52, and histidine 65 together coordinate a divalent metal cation. Histidine 65 (proton donor) is an active-site residue.

It belongs to the glycerophosphoryl diester phosphodiesterase family. A divalent metal cation serves as cofactor.

The catalysed reaction is a sn-glycero-3-phosphodiester + H2O = an alcohol + sn-glycerol 3-phosphate + H(+). Glycerophosphodiester phosphodiesterase hydrolyzes glycerophosphodiesters into glycerol-3-phosphate (G3P) and the corresponding alcohol. This chain is Probable glycerophosphodiester phosphodiesterase 2, found in Mycobacterium tuberculosis (strain ATCC 25618 / H37Rv).